The chain runs to 446 residues: N-succinylarginine dihydrolase (446 aa).

Residues 21–30, asparagine 112, and 139–140 each bind substrate; these read AGLSWGNVAS and HR. Glutamate 176 is an active-site residue. A substrate-binding site is contributed by arginine 216. Histidine 252 is an active-site residue. Positions 254 and 364 each coordinate substrate. Catalysis depends on cysteine 370, which acts as the Nucleophile.

Belongs to the succinylarginine dihydrolase family. As to quaternary structure, homodimer.

It carries out the reaction N(2)-succinyl-L-arginine + 2 H2O + 2 H(+) = N(2)-succinyl-L-ornithine + 2 NH4(+) + CO2. The protein operates within amino-acid degradation; L-arginine degradation via AST pathway; L-glutamate and succinate from L-arginine: step 2/5. Its function is as follows. Catalyzes the hydrolysis of N(2)-succinylarginine into N(2)-succinylornithine, ammonia and CO(2). The sequence is that of N-succinylarginine dihydrolase from Marinobacter nauticus (strain ATCC 700491 / DSM 11845 / VT8) (Marinobacter aquaeolei).